The chain runs to 2547 residues: Piezo-type mechanosensitive ion channel component 1 (2547 aa).

At 1 to 12 (MEPHVLGAGLYW) the chain is on the cytoplasmic side. The chain crosses the membrane as a helical span at residues 13-25 (LLLPCTLLAASLL). At 26 to 28 (RFN) the chain is on the extracellular side. The helical transmembrane segment at 29–44 (ALSLVYLLFLLLLPWL) threads the bilayer. At 45-58 (PGPSRHSIPGHTGR) the chain is on the cytoplasmic side. The chain crosses the membrane as a helical span at residues 59–81 (LLRALLCLSLLFLVAHLAFQICL). At 82–121 (HTVPHLDQFLGQNGSLWVKVSQHIGVTRLDLKDIFNTTRL) the chain is on the extracellular side. A glycan (N-linked (GlcNAc...) asparagine) is linked at asparagine 94. The chain crosses the membrane as a helical span at residues 122–138 (VAPDLGVLLASSLCLGL). Over 139–201 (CGRLTRKAGQ…ASRFRVTAHW (63 aa)) the chain is Cytoplasmic. A helical membrane pass occupies residues 202–221 (LLMTSGRTLVIVLLALAGIA). At 222–223 (HP) the chain is on the extracellular side. Residues 224-243 (SAFSSIYLVVFLAICTWWSC) traverse the membrane as a helical segment. Residues 244–254 (HFPLSPLGFNT) lie on the Cytoplasmic side of the membrane. Residues 255-275 (LCVMVSCFGAGHLICLYCYQT) traverse the membrane as a helical segment. Topologically, residues 276–316 (PFIQDMLPPGNIWARLFGLKNFVDLPNYSSPNALVLNTKHA) are extracellular. A helical transmembrane segment spans residues 317 to 337 (WPIYVSPGILLLLYYTATSLL). Residues 338-424 (KLHKSCPSEL…EMSPLHGLGH (87 aa)) are Cytoplasmic-facing. The segment at 347 to 387 (LRKETPREDEEHELELDHLEPEPQARDATQGEMPMTTEPDL) is disordered. The span at 361–371 (ELDHLEPEPQA) shows a compositional bias: basic and acidic residues. A helical transmembrane segment spans residues 425–445 (LIMDQSYVCALIAMMVWSIMY). Over 446–447 (HS) the chain is Extracellular. Residues 448–463 (WLTFVLLLWACLIWTV) form a helical membrane-spanning segment. Topologically, residues 464 to 468 (RSRHQ) are cytoplasmic. Residues 469–491 (LAMLCSPCILLYGLTLCCLRYVW) form a helical membrane-spanning segment. Residues 492–518 (AMELPELPTTLGPVSLHQLGLEHTRYP) lie on the Extracellular side of the membrane. A helical membrane pass occupies residues 519-536 (CLDLGAMLLYLLTFWLLL). Topologically, residues 537 to 580 (RQFVKEKLLKKQKVPAALLEVTVADTEPTQTQTLLRSLGELVTG) are cytoplasmic. The chain crosses the membrane as a helical span at residues 581-601 (IYVKYWIYVCAGMFIVVSFAG). Position 602 (arginine 602) is a topological domain, extracellular. A helical transmembrane segment spans residues 603–623 (LVVYKIVYMFLFLLCLTLFQV). Topologically, residues 624–633 (YYTLWRKLLR) are cytoplasmic. The helical transmembrane segment at 634–655 (VFWWLVVAYTMLVLIAVYTFQF) threads the bilayer. Residues 656 to 685 (QDFPTYWRNLTGFTDEQLGDLGLEQFSVSE) are Extracellular-facing. Residues 686 to 702 (LFSSILIPGFFLLACIL) form a helical membrane-spanning segment. Residues 703 to 811 (QLHYFHRPFM…RRLLELHVFK (109 aa)) lie on the Cytoplasmic side of the membrane. Serine 758 carries the post-translational modification Phosphoserine. Residues 812–823 (LVALYTVWVALK) traverse the membrane as a helical segment. Residues 824-826 (EVS) lie on the Extracellular side of the membrane. Residues 827–840 (VMNLLLVVLWAFAL) form a helical membrane-spanning segment. Residues 841 to 854 (PYPRFRPMASCLST) lie on the Cytoplasmic side of the membrane. Residues 855 to 869 (VWTCIIIVCKMLYQL) form a helical membrane-spanning segment. Over 870 to 921 (KIVNPHEYSSNCTEPFPNNTNLQPLEINQSLLYRGPVDPANWFGVRKGYPNL) the chain is Extracellular. Residues 922-949 (GYIQNHLQILLLLVFEAVVYRRQEHYRR) traverse the membrane as a helical segment. At 950 to 989 (QHQQAPLPAQAVCADGTRQRLDQDLLSCLKYFINFFFYKF) the chain is on the cytoplasmic side. The chain crosses the membrane as a helical span at residues 990–1005 (GLEICFLMAVNVIGQR). Over 1006–1007 (MN) the chain is Extracellular. A helical transmembrane segment spans residues 1008–1023 (FMVILHGCWLVAILTR). Over 1024–1036 (RRREAIARLWPNY) the chain is Cytoplasmic. A helical transmembrane segment spans residues 1037–1052 (CLFLTLFLLYQYLLCL). Residues 1053 to 1091 (GMPPALCIDYPWRWSKAIPMNSALIKWLYLPDFFRAPNS) lie on the Extracellular side of the membrane. Residues 1092-1113 (TNLISDFLLLLCASQQWQVFSA) form a helical membrane-spanning segment. Residues 1114–1148 (ERTEEWQRMAGINTDHLEPLRGEPNPIPNFIHCRS) are Cytoplasmic-facing. A helical membrane pass occupies residues 1149–1175 (YLDMLKVAVFRYLFWLVLVVVFVAGAT). Residues 1176 to 1180 (RISIF) lie on the Extracellular side of the membrane. Residues 1181–1199 (GLGYLLACFYLLLFGTTLL) traverse the membrane as a helical segment. The Cytoplasmic portion of the chain corresponds to 1200 to 1212 (QKDTRAQLVLWDC). Residues 1213-1231 (LILYNVTVIISKNMLSLLS) traverse the membrane as a helical segment. At 1232–1280 (CVFVEQMQSNFCWVIQLFSLVCTVKGYYDPKEMMTRDRDCLLPVEEAGI) the chain is on the extracellular side. Residues 1281 to 1297 (IWDSICFFFLLLQRRIF) form a helical membrane-spanning segment. Residues 1298 to 1656 (LSHYFLHVSA…ELLLDRRLHI (359 aa)) lie on the Cytoplasmic side of the membrane. Residues 1334-1365 (HRQIEEKSLAQLKRQMKRIRAKQEKYRQSQAS) are a coiled coil. 3 disordered regions span residues 1354–1396 (AKQE…RRQW), 1456–1480 (RRERARQERAEQLASGGDLNPDVEP), and 1567–1610 (TLSG…NTRS). The segment covering 1361–1372 (QSQASRGQLQSK) has biased composition (polar residues). Residues 1376–1392 (DPSQEPGPDSPGGSSPP) show a composition bias toward low complexity. Phosphoserine is present on residues serine 1385 and serine 1390. Positions 1592-1610 (SSMTDDTSSPLSTGYNTRS) are enriched in polar residues. 3 positions are modified to phosphoserine: serine 1627, serine 1631, and serine 1646. The chain crosses the membrane as a helical span at residues 1657 to 1700 (PELEEAERFEAQQGRTLRLLRAGYQCVAAHSELLCYFIIILNHM). Residues 1701-1704 (VTAS) lie on the Extracellular side of the membrane. Residues 1705–1720 (AASLVLPVLVFLWAML) traverse the membrane as a helical segment. Over 1721–1728 (TIPRPSKR) the chain is Cytoplasmic. Residues 1729 to 1747 (FWMTAIVFTEVMVVTKYLF) form a helical membrane-spanning segment. The Extracellular portion of the chain corresponds to 1748-1779 (QFGFFPWNSYVVLRRYENKPYFPPRILGLEKT). The helical transmembrane segment at 1780-1801 (DSYIKYDLVQLMALFFHRSQLL) threads the bilayer. Residues 1802-1976 (CYGLWDHEED…HTKYRAATDV (175 aa)) are Cytoplasmic-facing. 2 stretches are compositionally biased toward basic and acidic residues: residues 1816–1837 (DHCRSSVKDREAKEEPEAKLES) and 1855–1880 (PRDHIQGKGSIRSKDVIQDPPEDLKP). Residues 1816–1931 (DHCRSSVKDR…RPRHTQEKSK (116 aa)) are disordered. The segment covering 1881–1894 (RHTRHISIRFRRRK) has biased composition (basic residues). Over residues 1912–1931 (GEGKETTERKRPRHTQEKSK) the composition is skewed to basic and acidic residues. The chain crosses the membrane as a helical span at residues 1977–1996 (YALMFLADIVDIIIIIFGFW). At 1997-2016 (AFGKHSAATDIASSLSDDQV) the chain is on the extracellular side. Residues 2017–2033 (PQAFLFMLLVQFGTMVI) form a helical membrane-spanning segment. The Cytoplasmic portion of the chain corresponds to 2034–2047 (DRALYLRKTVLGKL). A helical membrane pass occupies residues 2048–2068 (AFQVVLVVAIHIWMFFILPAV). Over 2069–2076 (TERMFSQN) the chain is Extracellular. Residues 2077 to 2092 (AVAQLWYFVKCIYFAL) traverse the membrane as a helical segment. The Cytoplasmic segment spans residues 2093–2192 (SAYQIRCGYP…KKKIVKYGMG (100 aa)). The chain crosses the membrane as a helical span at residues 2193–2213 (GLIILFLIAIIWFPLLFMSLI). Over 2214 to 2457 (RSVVGVVNQP…IFSDKVSPPS (244 aa)) the chain is Extracellular. The cysteines at positions 2437 and 2441 are disulfide-linked. Residues 2458–2478 (LGFLAGYGIVGLYVSIVLVVG) form a helical membrane-spanning segment. The Cytoplasmic segment spans residues 2479 to 2547 (KFVRGFFSEI…TMIKWTRERE (69 aa)).

The protein belongs to the PIEZO (TC 1.A.75) family. As to quaternary structure, homotrimer; the homotrimer forms a propeller-shaped Piezo channel with a cation-ion conducting pore. Heterotrimeric interaction may occur between PIEZO1 and PIEZO2. Interacts with PKD2. Interacts with STOMl3. Interacts with TMC1, TMC2, PCDG15 and CIB2; the interaction may be part of the MET complex. Interacts with MDFIC (via C-terminus); the interaction prolongs Piezo channel inactivation. Interacts with MDFI (via C-terminus); the interaction prolongs Piezo channel inactivation. As to expression, expressed in bladder, colon, kidney and skin. Also expressed in bone marrow, liver, lung, spleen and erythrocytes (at protein level). Expressed in myoblasts (at protein level). Expressed in red blood cells. Expressed in cochlear inner and outer hair cells (IHCs and OHCs) and vestibular organ HCs.

Its subcellular location is the endoplasmic reticulum membrane. It localises to the endoplasmic reticulum-Golgi intermediate compartment membrane. The protein localises to the cell membrane. The protein resides in the cell projection. It is found in the lamellipodium membrane. It carries out the reaction K(+)(in) = K(+)(out). It catalyses the reaction Na(+)(in) = Na(+)(out). The enzyme catalyses Ca(2+)(in) = Ca(2+)(out). The catalysed reaction is Mg(2+)(in) = Mg(2+)(out). Its activity is regulated as follows. Regulated by auxillary subunits MDFIC and MDFI. Down-regulated by phosphatidylserines exposed on the cell surface. Divalent ions decrease the single-channel permeability of K(+). Functionally, pore-forming subunit of the mechanosensitive non-specific cation Piezo channel required for rapidly adapting mechanically activated (MA) currents and has a key role in sensing touch and tactile pain. Piezo channels are homotrimeric three-blade propeller-shaped structures that utilize a cap-motion and plug-and-latch mechanism to gate their ion-conducting pathways. Generates currents characterized by a linear current-voltage relationship that are sensitive to ruthenium red and gadolinium. Conductance to monovalent alkali ions is highest for K(+), intermediate for Na(+) and lowest for Li(+). Divalent ions except for Mn(2+) permeate the channel but more slowly than the monovalent ions and they also reduce K(+) currents. Plays a key role in epithelial cell adhesion by maintaining integrin activation through R-Ras recruitment to the ER, most probably in its activated state, and subsequent stimulation of calpain signaling. In inner ear hair cells, PIEZO1/2 subunits may constitute part of the mechanotransducer (MET) non-selective cation channel complex where they may act as pore-forming ion-conducting component in the complex. In the kidney, may contribute to the detection of intraluminal pressure changes and to urine flow sensing. Acts as a shear-stress sensor that promotes endothelial cell organization and alignment in the direction of blood flow through calpain activation. Plays a key role in blood vessel formation and vascular structure in both development and adult physiology. Acts as a sensor of phosphatidylserine (PS) flipping at the plasma membrane and governs morphogenesis of muscle cells. In myoblasts, flippase-mediated PS enrichment at the inner leaflet of plasma membrane triggers channel activation and Ca(2+) influx followed by Rho GTPases signal transduction, leading to assembly of cortical actomyosin fibers and myotube formation. The chain is Piezo-type mechanosensitive ion channel component 1 from Mus musculus (Mouse).